The following is a 496-amino-acid chain: MSEEHVHLDESEVYHIRKQKLAELRTSGFNFPNTFRREHLADALLKQYSETEKQTLEQKHVKVSVAGRIVLRRIMGKASFFHIQDVSGRIQVYLRSNDLPDVYEQFKHWDLGDIVGVQGELFKTNTGELTINAEHVELLTKSLRPLPDKFHGLADQELKYRKRYVDLIANEDSRKTFLIRSHLIKAFREFMDDNHFLEVETPMMHPIPGGALARPFVTHHNTLDMTMYLRIAPELYLKRLVVGGFERVYEINRNFRNEGISTRHNPEFTMLEFYQAYADYNDLMNFTEQLFHYLCDKVLATRQIEYQGQVIDFNKPFERLSVKEAILKYHPDIKAQQLETVEGCRTLLNDLDLPYKETDGLGKLQIILFEETVEHQLFQPTFITEYPTEISPLARRSDTNPEVTDRFEFFIAGREIANGFSELNDAEDQAERFRKQVEEKDAGDLEAMHFDSDYIEALEYGLPPTAGEGIGIDRLVMLFTNSQSIRDVILFPHLRQ.

2 residues coordinate Mg(2+): Glu408 and Glu415.

Belongs to the class-II aminoacyl-tRNA synthetase family. In terms of assembly, homodimer. It depends on Mg(2+) as a cofactor.

Its subcellular location is the cytoplasm. It catalyses the reaction tRNA(Lys) + L-lysine + ATP = L-lysyl-tRNA(Lys) + AMP + diphosphate. The protein is Lysine--tRNA ligase of Legionella pneumophila (strain Lens).